A 176-amino-acid polypeptide reads, in one-letter code: Endoribonuclease YbeY (176 aa).

Zn(2+)-binding residues include His-117, His-121, and His-127.

Belongs to the endoribonuclease YbeY family. Zn(2+) is required as a cofactor.

It localises to the cytoplasm. Its function is as follows. Single strand-specific metallo-endoribonuclease involved in late-stage 70S ribosome quality control and in maturation of the 3' terminus of the 16S rRNA. This is Endoribonuclease YbeY from Methylocella silvestris (strain DSM 15510 / CIP 108128 / LMG 27833 / NCIMB 13906 / BL2).